Here is a 236-residue protein sequence, read N- to C-terminus: NLP effector protein 3 (236 aa).

Residues 1–19 (MNLLGFLAVVALSTASVQA) form the signal peptide. Residues 103–113 (AIMYSWYFPKD) carry the Conserved undecapeptide motif I motif. The short motif at 120–126 (GHRHDWE) is the Hepta-peptide GHRHDWE motif II element.

This sequence belongs to the Necrosis inducing protein (NPP1) family.

Its subcellular location is the secreted. Secreted effector that contributes to virulence during infection by P.capsici. Induces distinct chlorosis at 3 days after inoculation of host C.annuum leaves, and all the chlorotic areas gradually turn brown and become moderately necrotic at 7 days after inoculation. Leads only to chlorotic areas, without necrosis at 7 days after non-host N.benthamiana leaves infection. Induces cell death in hot pepper. The polypeptide is NLP effector protein 3 (Phytophthora capsici).